The sequence spans 117 residues: UPF0295 protein GK0479 (117 aa).

The next 2 helical transmembrane spans lie at 12–32 (IRTF…LGLF) and 42–62 (LFML…FWIG).

The protein belongs to the UPF0295 family.

It is found in the cell membrane. This is UPF0295 protein GK0479 from Geobacillus kaustophilus (strain HTA426).